Here is a 666-residue protein sequence, read N- to C-terminus: Calcium/calmodulin-dependent protein kinase type II subunit beta (666 aa).

A Protein kinase domain is found at 14-272 (YQLYEDIGKG…AHEALKHPWV (259 aa)). Tyr17 carries the post-translational modification Phosphotyrosine. ATP-binding positions include 20 to 28 (IGKGAFSVV) and Lys43. Catalysis depends on Asp136, which acts as the Proton acceptor. The interval 283–292 (HRQETVECLK) is autoinhibitory domain. Thr287 carries the post-translational modification Phosphothreonine; by autocatalysis. The interval 291–301 (LKKFNARRKLK) is calmodulin-binding. 2 positions are modified to phosphothreonine; by autocatalysis: Thr306 and Thr307. Residues 349-534 (ADGVKPQTNS…IPGPLPTPSR (186 aa)) are disordered. Polar residues predominate over residues 354–369 (PQTNSTKNSAAATSPK). Residues Ser367, Ser394, and Ser397 each carry the phosphoserine modification. Phosphothreonine occurs at positions 400 and 401. Pro residues predominate over residues 432–447 (LPCPSPAPFSPLPAPS). Residues 479-491 (SPALLGPLSSPSP) show a composition bias toward low complexity. The segment covering 514–531 (PVGPPPCPSPTIPGPLPT) has biased composition (pro residues).

The protein belongs to the protein kinase superfamily. CAMK Ser/Thr protein kinase family. CaMK subfamily. CAMK2 is composed of 4 different chains: alpha (CAMK2A), beta (CAMK2B), gamma (CAMK2G), and delta (CAMK2D). The different isoforms assemble into homo- or heteromultimeric holoenzymes composed of 12 subunits with two hexameric rings stacked one on top of the other. Interacts with SYNGAP1 and CAMK2N2. Interacts with MPDZ. Interacts with FOXO3. Interacts (when in a kinase inactive state not associated with calmodulin) with ARC; leading to target ARC to inactive synapses. Interacts with CAMK2N1; this interaction requires CAMK2B activation by Ca(2+). In terms of processing, autophosphorylation of Thr-287 following activation by Ca(2+)/calmodulin. Phosphorylation of Thr-287 locks the kinase into an activated state. In terms of tissue distribution, widely expressed. Expressed in adult and fetal brain. Expression is slightly lower in fetal brain. Expressed in skeletal muscle.

The protein resides in the cytoplasm. It localises to the cytoskeleton. The protein localises to the microtubule organizing center. Its subcellular location is the centrosome. It is found in the sarcoplasmic reticulum membrane. The protein resides in the synapse. The catalysed reaction is L-seryl-[protein] + ATP = O-phospho-L-seryl-[protein] + ADP + H(+). It catalyses the reaction L-threonyl-[protein] + ATP = O-phospho-L-threonyl-[protein] + ADP + H(+). Activated by Ca(2+)/calmodulin. Binding of calmodulin results in conformational change that relieves intrasteric autoinhibition and allows autophosphorylation of Thr-287 which turns the kinase in a constitutively active form and confers to the kinase a Ca(2+)-independent activity. In terms of biological role, calcium/calmodulin-dependent protein kinase that functions autonomously after Ca(2+)/calmodulin-binding and autophosphorylation, and is involved in dendritic spine and synapse formation, neuronal plasticity and regulation of sarcoplasmic reticulum Ca(2+) transport in skeletal muscle. In neurons, plays an essential structural role in the reorganization of the actin cytoskeleton during plasticity by binding and bundling actin filaments in a kinase-independent manner. This structural function is required for correct targeting of CaMK2A, which acts downstream of NMDAR to promote dendritic spine and synapse formation and maintain synaptic plasticity which enables long-term potentiation (LTP) and hippocampus-dependent learning. In developing hippocampal neurons, promotes arborization of the dendritic tree and in mature neurons, promotes dendritic remodeling. Also regulates the migration of developing neurons. Participates in the modulation of skeletal muscle function in response to exercise. In slow-twitch muscles, is involved in regulation of sarcoplasmic reticulum (SR) Ca(2+) transport and in fast-twitch muscle participates in the control of Ca(2+) release from the SR through phosphorylation of triadin, a ryanodine receptor-coupling factor, and phospholamban (PLN/PLB), an endogenous inhibitor of SERCA2A/ATP2A2. In response to interferon-gamma (IFN-gamma) stimulation, catalyzes phosphorylation of STAT1, stimulating the JAK-STAT signaling pathway. Phosphorylates reticulophagy regulator RETREG1 at 'Ser-151' under endoplasmic reticulum stress conditions which enhances RETREG1 oligomerization and its membrane scission and reticulophagy activity. The sequence is that of Calcium/calmodulin-dependent protein kinase type II subunit beta (CAMK2B) from Homo sapiens (Human).